The primary structure comprises 257 residues: MLSKRILPCLDVKAGRVVKGVNFVDLKDAGDPVELAKVYNDAGADELVFLDITATHEDRDTIIDVVYRTAEQVFIPLTVGGGIQSLENVKALLRAGADKVSINSAAVRDPELIDRASDRFGNQCIVVAIDARRRVDPSNPGWDVYVRGGRENTGLDALSWAKEVEKRGAGELLVTSMDADGTQAGYDLELTRAIAESVEIPVIASGGAGNCEHIYTALTEGKAEAALLASLLHYGQLSVAEIKNYLRDCQVPVRLYA.

Residues Asp-11 and Asp-130 contribute to the active site.

The protein belongs to the HisA/HisF family. In terms of assembly, heterodimer of HisH and HisF.

The protein localises to the cytoplasm. It catalyses the reaction 5-[(5-phospho-1-deoxy-D-ribulos-1-ylimino)methylamino]-1-(5-phospho-beta-D-ribosyl)imidazole-4-carboxamide + L-glutamine = D-erythro-1-(imidazol-4-yl)glycerol 3-phosphate + 5-amino-1-(5-phospho-beta-D-ribosyl)imidazole-4-carboxamide + L-glutamate + H(+). It functions in the pathway amino-acid biosynthesis; L-histidine biosynthesis; L-histidine from 5-phospho-alpha-D-ribose 1-diphosphate: step 5/9. Its function is as follows. IGPS catalyzes the conversion of PRFAR and glutamine to IGP, AICAR and glutamate. The HisF subunit catalyzes the cyclization activity that produces IGP and AICAR from PRFAR using the ammonia provided by the HisH subunit. The polypeptide is Imidazole glycerol phosphate synthase subunit HisF (Trichormus variabilis (strain ATCC 29413 / PCC 7937) (Anabaena variabilis)).